The chain runs to 364 residues: Chorismate synthase (364 aa).

Arg-47 is an NADP(+) binding site. FMN is bound by residues 125–127, Gly-288, 303–307, and Arg-329; these read RAS and KPTAT.

Belongs to the chorismate synthase family. As to quaternary structure, homotetramer. The cofactor is FMNH2.

It carries out the reaction 5-O-(1-carboxyvinyl)-3-phosphoshikimate = chorismate + phosphate. It functions in the pathway metabolic intermediate biosynthesis; chorismate biosynthesis; chorismate from D-erythrose 4-phosphate and phosphoenolpyruvate: step 7/7. In terms of biological role, catalyzes the anti-1,4-elimination of the C-3 phosphate and the C-6 proR hydrogen from 5-enolpyruvylshikimate-3-phosphate (EPSP) to yield chorismate, which is the branch point compound that serves as the starting substrate for the three terminal pathways of aromatic amino acid biosynthesis. This reaction introduces a second double bond into the aromatic ring system. In Synechococcus sp. (strain CC9902), this protein is Chorismate synthase.